Here is a 140-residue protein sequence, read N- to C-terminus: Ribosome-binding factor A (140 aa).

Belongs to the RbfA family. In terms of assembly, monomer. Binds 30S ribosomal subunits, but not 50S ribosomal subunits or 70S ribosomes.

The protein localises to the cytoplasm. Its function is as follows. One of several proteins that assist in the late maturation steps of the functional core of the 30S ribosomal subunit. Associates with free 30S ribosomal subunits (but not with 30S subunits that are part of 70S ribosomes or polysomes). Required for efficient processing of 16S rRNA. May interact with the 5'-terminal helix region of 16S rRNA. The protein is Ribosome-binding factor A of Cereibacter sphaeroides (strain ATCC 17023 / DSM 158 / JCM 6121 / CCUG 31486 / LMG 2827 / NBRC 12203 / NCIMB 8253 / ATH 2.4.1.) (Rhodobacter sphaeroides).